The following is a 316-amino-acid chain: 2,3-dihydroxyphenylpropionate/2,3-dihydroxicinnamic acid 1,2-dioxygenase (316 aa).

H115 (proton donor) is an active-site residue. Residue H180 is the Proton acceptor of the active site.

This sequence belongs to the LigB/MhpB extradiol dioxygenase family. In terms of assembly, homotetramer. The cofactor is Fe(2+).

The enzyme catalyses 3-(2,3-dihydroxyphenyl)propanoate + O2 = (2Z,4E)-2-hydroxy-6-oxonona-2,4-dienedioate + H(+). It catalyses the reaction (2E)-3-(2,3-dihydroxyphenyl)prop-2-enoate + O2 = (2Z,4E,7E)-2-hydroxy-6-oxonona-2,4,7-trienedioate + H(+). It participates in aromatic compound metabolism; 3-phenylpropanoate degradation. Functionally, catalyzes the non-heme iron(II)-dependent oxidative cleavage of 2,3-dihydroxyphenylpropionic acid and 2,3-dihydroxicinnamic acid into 2-hydroxy-6-ketononadienedioate and 2-hydroxy-6-ketononatrienedioate, respectively. The chain is 2,3-dihydroxyphenylpropionate/2,3-dihydroxicinnamic acid 1,2-dioxygenase from Rhodococcus rhodochrous.